We begin with the raw amino-acid sequence, 2149 residues long: Polyketide synthase 1 (2149 aa).

The segment at 19 to 261 (FIFGDQSSCN…TRLAVHAPYH (243 aa)) is N-terminal acylcarrier protein transacylase domain (SAT). Residues 394–829 (ESKIAIIGMS…GGNTALLVED (436 aa)) form the Ketosynthase family 3 (KS3) domain. Residues Cys566, His701, and His745 each act as for beta-ketoacyl synthase activity in the active site. Residues 929 to 1233 (AFVFSGQGSQ…PSLMRNKDGW (305 aa)) form a malonyl-CoA:ACP transacylase (MAT) domain region. Ser1018 acts as the For acyl/malonyl transferase activity in catalysis. Positions 1310–1624 (TASVHRIVHE…RKVLNTAMPP (315 aa)) are product template (PT) domain. The interval 1314 to 1447 (HRIVHESVDK…SSLHFERPKV (134 aa)) is N-terminal hotdog fold. A PKS/mFAS DH domain is found at 1314–1619 (HRIVHESVDK…FQGIPRKVLN (306 aa)). His1346 functions as the Proton acceptor; for dehydratase activity in the catalytic mechanism. The C-terminal hotdog fold stretch occupies residues 1474 to 1619 (LNSRMSSGVI…FQGIPRKVLN (146 aa)). The active-site Proton donor; for dehydratase activity is the Asp1533. Residues 1619–1657 (NTAMPPPKSQNEAPVRSAPAKPAAKPPKSASSEHSGHFA) are disordered. Over residues 1635–1650 (SAPAKPAAKPPKSASS) the composition is skewed to low complexity. A Carrier 1 domain is found at 1678–1752 (RNPMLAVFKI…DLATHLGLDT (75 aa)). An O-(pantetheine 4'-phosphoryl)serine modification is found at Ser1712. Over residues 1755–1790 (SDQSSGQSSSSGGLSPRSDSIGEITSSATTPPSLSP) the composition is skewed to low complexity. The disordered stretch occupies residues 1755–1796 (SDQSSGQSSSSGGLSPRSDSIGEITSSATTPPSLSPRGSVSG). In terms of domain architecture, Carrier 2 spans 1793 to 1870 (SVSGSQCKDV…SFKHMFQQGH (78 aa)). Ser1830 is subject to O-(pantetheine 4'-phosphoryl)serine. The segment at 1882-2147 (LKQYRATSTL…ERVAAFIRST (266 aa)) is thioesterase (TE) domain. Ser1973 functions as the For thioesterase activity in the catalytic mechanism.

Its function is as follows. Polyketide synthase; part of the Pks1 gene cluster that mediates the biosynthesis of an anthraquinone derivative pigment that contributes to conidial pigmentation that provides protection from UV radiation, heat and cold stress. The polyketide synthase Pks1 produces 1-acetyl-2,4,6,8-tetrahydroxy-9,10-anthraquinone though condensation of acetyl-CoA with malonyl-CoA. The dehydratase EthD and the laccase Mlac1 further convert the anthraquinone derivative into the final conidial pigment. This is Polyketide synthase 1 from Metarhizium majus (strain ARSEF 297).